The sequence spans 499 residues: MARCRRRSGCTAGAALLLLLALALSGGGGAAPQGAEVTGLPGFDGALPSKHYAGYVTVDEGHGRNLFYYVVESERDPGKDPVVLWLNGGPGCSSFDGFVYEHGPFNFESGGSVKSLPKLHLNPYAWSKVSTMIYLDSPAGVGLSYSKNVSDYETGDLKTATDSHTFLLKWFQLYPEFLSNPFYIAGESYAGVYVPTLSHEVVKGIQGGAKPTINFKGYMVGNGVCDTIFDGNALVPFAHGMGLISDEIYQQASTSCHGNYWNATDGKCDTAISKIESLISGLNIYDILEPCYHSRSIKEVNLQNSKLPQSFKDLGTTNKPFPVRTRMLGRAWPLRAPVKAGRVPSWQEVASGVPCMSDEVATAWLDNAAVRSAIHAQSVSAIGPWLLCTDKLYFVHDAGSMIAYHKNLTSQGYRAIIFSGDHDMCVPFTGSEAWTKSLGYGVVDSWRPWITNGQVSGYTEGYEHGLTFATIKGAGHTVPEYKPQEAFAFYSRWLAGSKL.

The N-terminal stretch at 1-30 is a signal peptide; sequence MARCRRRSGCTAGAALLLLLALALSGGGGA. Intrachain disulfides connect cysteine 92/cysteine 388, cysteine 256/cysteine 268, and cysteine 291/cysteine 355. An N-linked (GlcNAc...) asparagine glycan is attached at asparagine 148. Serine 188 is an active-site residue. Asparagine 262 carries an N-linked (GlcNAc...) asparagine glycan. Residues 297-351 constitute a propeptide, linker peptide; sequence IKEVNLQNSKLPQSFKDLGTTNKPFPVRTRMLGRAWPLRAPVKAGRVPSWQEVAS. Asparagine 407 carries an N-linked (GlcNAc...) asparagine glycan. Residues aspartate 423 and histidine 476 contribute to the active site. The Microbody targeting signal signature appears at 497–499; sequence SKL.

This sequence belongs to the peptidase S10 family. In terms of assembly, carboxypeptidase I is a dimer, where each monomer is composed of two chains linked by disulfide bonds. In terms of processing, the linker peptide is endoproteolytically excised during enzyme maturation.

It localises to the secreted. The enzyme catalyses Release of a C-terminal amino acid with broad specificity.. Its function is as follows. May be involved in the degradation of small peptides (2-5 residues) or in the degradation of storage proteins in the embryo. The sequence is that of Serine carboxypeptidase 1 (CBP1) from Hordeum vulgare (Barley).